A 337-amino-acid polypeptide reads, in one-letter code: Nucleoid-associated protein HS_0228 (337 aa).

Belongs to the YejK family.

It is found in the cytoplasm. Its subcellular location is the nucleoid. This Histophilus somni (strain 129Pt) (Haemophilus somnus) protein is Nucleoid-associated protein HS_0228.